We begin with the raw amino-acid sequence, 421 residues long: Serine hydroxymethyltransferase (421 aa).

(6S)-5,6,7,8-tetrahydrofolate is bound by residues Leu-121 and 125-127 (GHL). Lys-229 carries the post-translational modification N6-(pyridoxal phosphate)lysine.

The protein belongs to the SHMT family. As to quaternary structure, homodimer. Requires pyridoxal 5'-phosphate as cofactor.

The protein localises to the cytoplasm. The catalysed reaction is (6R)-5,10-methylene-5,6,7,8-tetrahydrofolate + glycine + H2O = (6S)-5,6,7,8-tetrahydrofolate + L-serine. It functions in the pathway one-carbon metabolism; tetrahydrofolate interconversion. Its pathway is amino-acid biosynthesis; glycine biosynthesis; glycine from L-serine: step 1/1. In terms of biological role, catalyzes the reversible interconversion of serine and glycine with tetrahydrofolate (THF) serving as the one-carbon carrier. This reaction serves as the major source of one-carbon groups required for the biosynthesis of purines, thymidylate, methionine, and other important biomolecules. Also exhibits THF-independent aldolase activity toward beta-hydroxyamino acids, producing glycine and aldehydes, via a retro-aldol mechanism. The protein is Serine hydroxymethyltransferase of Haemophilus influenzae (strain PittEE).